A 264-amino-acid chain; its full sequence is Glycosylphosphatidylinositol anchor biosynthesis protein 11 (264 aa).

Positions 1–45 (MPLVDPVTMSTPSTPAKAMGKSLPNTVKDPSPPPKAGSHTRSPVE) are disordered. The next 6 helical transmembrane spans lie at 49–69 (NSYY…VLLW), 83–103 (LILP…LPVA), 132–152 (LLSL…MVLF), 160–180 (APHT…PLFY), 202–222 (SVGG…PIPL), and 233–253 (VTVL…GRTL).

Belongs to the PIGF family.

It localises to the endoplasmic reticulum membrane. It functions in the pathway glycolipid biosynthesis; glycosylphosphatidylinositol-anchor biosynthesis. Functionally, acts in the GPI biosynthetic pathway between GlcNAc-PI synthesis and GPI transfer to protein. The chain is Glycosylphosphatidylinositol anchor biosynthesis protein 11 (GPI11) from Pyricularia oryzae (strain 70-15 / ATCC MYA-4617 / FGSC 8958) (Rice blast fungus).